A 461-amino-acid polypeptide reads, in one-letter code: Porin AaxA (461 aa).

The first 22 residues, 1-22, serve as a signal peptide directing secretion; the sequence is MSFRSILLTALLSLSFTNTMQA.

The protein belongs to the OprB family.

The protein resides in the cell outer membrane. Its function is as follows. Facilitates L-arginine uptake, as part of the AaxABC system. The arginine uptake by the bacterium in the macrophage may be a virulence factor against the host innate immune response. This chain is Porin AaxA (aaxA), found in Chlamydia muridarum (strain MoPn / Nigg).